The following is a 412-amino-acid chain: Isocitrate dehydrogenase [NADP] cytoplasmic (412 aa).

Residues 76 to 78 (TIT) and arginine 83 contribute to the NADP(+) site. Threonine 78 contributes to the substrate binding site. Residues 95–101 (SPNGTIR), arginine 110, and arginine 133 contribute to the substrate site. Residue aspartate 253 participates in Mn(2+) binding. An NADP(+)-binding site is contributed by lysine 261. Position 276 (aspartate 276) interacts with Mn(2+). NADP(+) is bound by residues 309–314 (GTVTRH) and asparagine 327.

The protein belongs to the isocitrate and isopropylmalate dehydrogenases family. In terms of assembly, homodimer. It depends on Mg(2+) as a cofactor. The cofactor is Mn(2+).

It is found in the cytoplasm. The catalysed reaction is D-threo-isocitrate + NADP(+) = 2-oxoglutarate + CO2 + NADPH. This chain is Isocitrate dehydrogenase [NADP] cytoplasmic (idhC), found in Dictyostelium discoideum (Social amoeba).